The chain runs to 382 residues: Protein farnesyltransferase subunit beta (382 aa).

PFTB repeat units follow at residues 78-119 (CERA…CLCD), 129-170 (RDRL…SLVG), 178-219 (FEGT…ALLG), 226-268 (EIKL…VIVA), and 286-328 (PEKL…SSIA). (2E,6E)-farnesyl diphosphate contacts are provided by residues 204–207 (HGGY) and 247–250 (RSNK). Residues Asp-253 and Cys-255 each contribute to the Zn(2+) site. 256 to 259 (YSWW) provides a ligand contact to (2E,6E)-farnesyl diphosphate. Residue His-316 participates in Zn(2+) binding.

The protein belongs to the protein prenyltransferase subunit beta family. In terms of assembly, heterodimer of an alpha(cwp1) and a beta(cpp1) subunit. Requires Zn(2+) as cofactor.

The catalysed reaction is L-cysteinyl-[protein] + (2E,6E)-farnesyl diphosphate = S-(2E,6E)-farnesyl-L-cysteinyl-[protein] + diphosphate. Its function is as follows. Catalyzes the transfer of a farnesyl moiety from farnesyl diphosphate to a cysteine at the fourth position from the C-terminus of several proteins. The beta(cpp1) subunit is responsible for peptide-binding. The polypeptide is Protein farnesyltransferase subunit beta (cpp1) (Schizosaccharomyces pombe (strain 972 / ATCC 24843) (Fission yeast)).